The sequence spans 277 residues: Large ribosomal subunit protein uL2 (277 aa).

Residues 199–277 (DHMNTSVGKA…ILISRHKRKK (79 aa)) are disordered. The span at 209 to 220 (GRTRWMGRRPHN) shows a compositional bias: basic residues.

The protein belongs to the universal ribosomal protein uL2 family. As to quaternary structure, part of the 50S ribosomal subunit. Forms a bridge to the 30S subunit in the 70S ribosome.

Functionally, one of the primary rRNA binding proteins. Required for association of the 30S and 50S subunits to form the 70S ribosome, for tRNA binding and peptide bond formation. It has been suggested to have peptidyltransferase activity; this is somewhat controversial. Makes several contacts with the 16S rRNA in the 70S ribosome. The chain is Large ribosomal subunit protein uL2 from Nitrobacter winogradskyi (strain ATCC 25391 / DSM 10237 / CIP 104748 / NCIMB 11846 / Nb-255).